Here is a 382-residue protein sequence, read N- to C-terminus: Chorismate synthase (382 aa).

Residues Arg-39 and Arg-45 each contribute to the NADP(+) site. FMN-binding positions include 127-129, 245-246, Gly-290, 305-309, and Arg-331; these read RAS, QA, and KPIPT.

It belongs to the chorismate synthase family. Homotetramer. It depends on FMNH2 as a cofactor.

The catalysed reaction is 5-O-(1-carboxyvinyl)-3-phosphoshikimate = chorismate + phosphate. Its pathway is metabolic intermediate biosynthesis; chorismate biosynthesis; chorismate from D-erythrose 4-phosphate and phosphoenolpyruvate: step 7/7. In terms of biological role, catalyzes the anti-1,4-elimination of the C-3 phosphate and the C-6 proR hydrogen from 5-enolpyruvylshikimate-3-phosphate (EPSP) to yield chorismate, which is the branch point compound that serves as the starting substrate for the three terminal pathways of aromatic amino acid biosynthesis. This reaction introduces a second double bond into the aromatic ring system. This Desulfitobacterium hafniense (strain Y51) protein is Chorismate synthase.